Here is a 212-residue protein sequence, read N- to C-terminus: Large ribosomal subunit protein uL3 (212 aa).

The disordered stretch occupies residues 119–146 (YQGNIKRWGQSRGPETHGSRYHRIPGSM).

Belongs to the universal ribosomal protein uL3 family. In terms of assembly, part of the 50S ribosomal subunit. Forms a cluster with proteins L14 and L19.

One of the primary rRNA binding proteins, it binds directly near the 3'-end of the 23S rRNA, where it nucleates assembly of the 50S subunit. The polypeptide is Large ribosomal subunit protein uL3 (Lactobacillus helveticus (strain DPC 4571)).